The chain runs to 170 residues: Peptide deformylase 1 (170 aa).

Fe cation-binding residues include Cys-91 and His-133. Residue Glu-134 is part of the active site. His-137 provides a ligand contact to Fe cation.

This sequence belongs to the polypeptide deformylase family. Requires Fe(2+) as cofactor.

The catalysed reaction is N-terminal N-formyl-L-methionyl-[peptide] + H2O = N-terminal L-methionyl-[peptide] + formate. Functionally, removes the formyl group from the N-terminal Met of newly synthesized proteins. Requires at least a dipeptide for an efficient rate of reaction. N-terminal L-methionine is a prerequisite for activity but the enzyme has broad specificity at other positions. The sequence is that of Peptide deformylase 1 from Vibrio vulnificus (strain CMCP6).